The primary structure comprises 213 residues: MSNRTALLGKKLGMSQVWDENGFFVPVTLVDVSTNVVTAVKSEESDGYKAVQLGYGQVDPTKVTKPLAGHFAKAGVTPRRHLAEVRTDNAEEFEPGQELTAELFPEGTLVDVTGTTKGKGFAGTIKRWGFKSYRRTHGSHKNERRPGSVGACATPSRILKGKRMAGRMGHVTNTALNLTIVSSDVENGVLAIKGAIPGPKGSIVLVRSAVKGA.

This sequence belongs to the universal ribosomal protein uL3 family. In terms of assembly, part of the 50S ribosomal subunit. Forms a cluster with proteins L14 and L19.

Its function is as follows. One of the primary rRNA binding proteins, it binds directly near the 3'-end of the 23S rRNA, where it nucleates assembly of the 50S subunit. This Bifidobacterium adolescentis (strain ATCC 15703 / DSM 20083 / NCTC 11814 / E194a) protein is Large ribosomal subunit protein uL3.